A 588-amino-acid chain; its full sequence is Adenine deaminase (588 aa).

This sequence belongs to the metallo-dependent hydrolases superfamily. Adenine deaminase family. Homodimer. It depends on Mn(2+) as a cofactor.

It catalyses the reaction adenine + H2O + H(+) = hypoxanthine + NH4(+). This Shigella flexneri protein is Adenine deaminase.